The sequence spans 82 residues: Small ribosomal subunit protein uS17 (82 aa).

Belongs to the universal ribosomal protein uS17 family. Part of the 30S ribosomal subunit.

One of the primary rRNA binding proteins, it binds specifically to the 5'-end of 16S ribosomal RNA. This is Small ribosomal subunit protein uS17 from Phenylobacterium zucineum (strain HLK1).